The following is a 214-amino-acid chain: Ribosomal RNA small subunit methyltransferase G (214 aa).

Residues Gly81, Met86, 132–133 (VE), and Arg147 each bind S-adenosyl-L-methionine.

Belongs to the methyltransferase superfamily. RNA methyltransferase RsmG family.

It localises to the cytoplasm. The catalysed reaction is guanosine(527) in 16S rRNA + S-adenosyl-L-methionine = N(7)-methylguanosine(527) in 16S rRNA + S-adenosyl-L-homocysteine. Specifically methylates the N7 position of guanine in position 527 of 16S rRNA. In Pseudomonas fluorescens (strain Pf0-1), this protein is Ribosomal RNA small subunit methyltransferase G.